The chain runs to 41 residues: Photosystem I reaction center subunit IX (41 aa).

The helical transmembrane segment at Tyr-7–Ile-27 threads the bilayer.

The protein belongs to the PsaJ family.

It is found in the plastid. Its subcellular location is the chloroplast thylakoid membrane. In terms of biological role, may help in the organization of the PsaE and PsaF subunits. The chain is Photosystem I reaction center subunit IX from Pleurastrum terricola (Filamentous green alga).